The following is a 249-amino-acid chain: MGTPEFPDLGKHCSVDYCKQIDFLPFTCDRCLQVYCLDHRSYMKHDCPKGNRGDVTVVICPLCAKGVRLNPDEDPNITWEKHVNTDCDPSNYEKAVKKKKCPVPRCRELLTFSNTIKCRDCSIDHCLKHRFGPDHSCSGPKKPESSFSFMGFLSTNTKEAPASSSSSSRWSSLFASAEASISRLGNDISQKLQFASGNDGNSEKTQERNGKQNCGKVTVDVCPKCSRGFRDPVDLLKHIDKDHRGTSKA.

2 AN1-type zinc fingers span residues 7–55 and 95–145; these read PDLG…RGDV and AVKK…KPES. Residues C13, C18, C28, C31, C36, H39, H45, C47, C101, C106, C118, C121, C126, H129, H135, and C137 each coordinate Zn(2+). The tract at residues 194 to 213 is disordered; it reads FASGNDGNSEKTQERNGKQN. Positions 201–210 are enriched in basic and acidic residues; the sequence is NSEKTQERNG. The C2H2-type zinc-finger motif lies at 220–243; the sequence is DVCPKCSRGFRDPVDLLKHIDKDH.

May be involved in environmental stress response. This is Zinc finger AN1 and C2H2 domain-containing stress-associated protein 13 (SAP13) from Arabidopsis thaliana (Mouse-ear cress).